The sequence spans 1014 residues: MSTNLANYFAGKKDIENEHVNRNASHESNSKSDVKISGNDNDNDEDMGPSVSMAVQAKNDDDFHKSTFNLKRTRSMGLLDEYIDPTKKLLGRSDDLYDNDNEYYDNSSNNSSSNSSDDDYDDGYQEHSTSVSPPPADNDSYLIPQDDNDVVVEPERHVDYLSHEWKESEISNSWKYIILKKKKRDVDLVNAARLENASWRTWAKARNNLKTVSPEVVNWSKDSDVTWLYGPIVRDSEGNAQSEEEHDLERGYGSDDENSKRISMPTKNSKSIAAAPKPILKKRTVTEIIEDNALWKLNEARKHMTEMKHASVIMDPNGNKNVHDDFDALAAQVNAQYYHYPKESNSSVSLKSQHSDKKDNSTIPNPVGENSNGGGDKGEEDLHLKSALHVQNNRSTAQSNKSILENSTNDRKANLDQNLNSPDNNRFPSSTSSSNRDNENNSMGLSSILTSNPSEKSNKPTKNRHIHFNDRVEQCMALRYPASQSEDDESDDENKQYVDVNNNANVTTINNNRTPLLAIQHKSIPINSATEHLNKNTSDDDTSSQSSSSSHSDDEEHGGLYINARFSRRSDSGVHSPITDNSSVASSTTSRAHVRPIIKLLPDTTLNYGSDEESDNGEFNGYGNAVSHNVNTSRGYDYIYDYNSVYTGDTSSFLPVDSCDIVDVPEGMDLQTAIADDNASNYEFNNAVESKEKHVPQLHKASANNTTRQHGSHMLLYDDDNYSSSSDSEQQFIEDSQYNSSDDEEEEDDDDQEVDDNHDEGLSLRRTLSLGKSGSTNSLYDLAQPSLSSATPQQKNPTNFTGGKTDVDKDAQLAVRPYPLKRNSSSGNFIFNSDSEEESSSEEEQRPLPANSQLVNRSVLKGSVTPANISSQKKKALPKQPKASDSSQSFRIVNNTPSPAEVGASDVAIEGYFSPRNESIKSVVSGGNMMDHQDHSEMDTLAKGFENCHINNASKLKDKKVDSVQTTRKEASLTDSSNESLHKVVQNARGMASKYLHSWKKSDVKPQENGNDSS.

Positions 1–63 are disordered; sequence MSTNLANYFA…AVQAKNDDDF (63 aa). Position 2 is an N-acetylserine (Ser2). The segment covering 11–34 has biased composition (basic and acidic residues); sequence GKKDIENEHVNRNASHESNSKSDV. Phosphothreonine is present on Thr73. The residue at position 75 (Ser75) is a Phosphoserine. Disordered stretches follow at residues 90 to 144 and 236 to 270; these read LGRS…YLIP and SEGNAQSEEEHDLERGYGSDDENSKRISMPTKNSK. Residues 104–115 are compositionally biased toward low complexity; sequence YDNSSNNSSSNS. 2 positions are modified to phosphoserine: Ser242 and Ser254. Basic and acidic residues predominate over residues 247 to 260; sequence DLERGYGSDDENSK. The short motif at 277 to 283 is the Nuclear localization signal element; it reads KPILKKR. Residue Ser311 is modified to Phosphoserine. The segment at 340–463 is disordered; the sequence is YPKESNSSVS…SEKSNKPTKN (124 aa). 4 stretches are compositionally biased toward polar residues: residues 343 to 352, 361 to 370, 389 to 407, and 415 to 455; these read ESNSSVSLKS, STIPNPVGEN, HVQNNRSTAQSNKSILENS, and LDQN…NPSE. Phosphoserine is present on Ser421. The residue at position 480 (Tyr480) is a Phosphotyrosine. At Ser490 the chain carries Phosphoserine. Disordered regions lie at residues 531–557 and 570–591; these read EHLNKNTSDDDTSSQSSSSSHSDDEEH and SDSGVHSPITDNSSVASSTTSR. Phosphoserine is present on residues Ser570, Ser572, and Ser576. Residues 578 to 591 show a composition bias toward polar residues; that stretch reads ITDNSSVASSTTSR. The short motif at 595–599 is the Nuclear localization signal element; it reads RPIIK. Residues Ser610, Ser614, and Ser680 each carry the phosphoserine modification. The disordered stretch occupies residues 690-897; sequence SKEKHVPQLH…QSFRIVNNTP (208 aa). Low complexity predominate over residues 722–740; the sequence is YSSSSDSEQQFIEDSQYNS. The segment covering 741 to 758 has biased composition (acidic residues); the sequence is SDDEEEEDDDDQEVDDNH. Polar residues-rich tracts occupy residues 770-802 and 822-833; these read LGKSGSTNSLYDLAQPSLSSATPQQKNPTNFTG and RNSSSGNFIFNS. Residues 873-879 carry the Nuclear localization signal motif; that stretch reads KKKALPK. The span at 884 to 897 shows a compositional bias: polar residues; it reads SDSSQSFRIVNNTP. The residue at position 896 (Thr896) is a Phosphothreonine. Ser898 bears the Phosphoserine mark. Positions 959-972 are enriched in basic and acidic residues; the sequence is KKVDSVQTTRKEAS. The interval 959-982 is disordered; it reads KKVDSVQTTRKEASLTDSSNESLH. The residue at position 980 (Ser980) is a Phosphoserine.

As to quaternary structure, interacts with SAK1.

The protein resides in the nucleus. Functionally, involved in RNA processing and negative regulation of glucose repression. Regulates the level of two antigens, P43 and P70. Binds to protein phosphatase type 1. Functions with REG2 and SNF1 protein kinase to regulate growth. Might regulate SNF1 directly or indirectly. The sequence is that of Resistance to glucose repression protein 1 (REG1) from Saccharomyces cerevisiae (strain ATCC 204508 / S288c) (Baker's yeast).